A 239-amino-acid chain; its full sequence is Ribulose-1,5-bisphosphate 5-phosphatase (239 aa).

The active-site Nucleophile is the aspartate 8. Residues aspartate 8, aspartate 10, and aspartate 184 each contribute to the Mg(2+) site. Residue aspartate 10 is the Proton donor of the active site. The interval proline 205–serine 239 is disordered. Residues serine 214 to isoleucine 228 are compositionally biased toward basic and acidic residues.

It belongs to the HAD-like hydrolase superfamily. Mg(2+) is required as a cofactor. The cofactor is Mn(2+). Requires Co(2+) as cofactor. It depends on Ni(2+) as a cofactor.

The catalysed reaction is D-ribulose 1,5-bisphosphate + H2O = D-ribulose 1-phosphate + phosphate. Its activity is regulated as follows. Requires both monovalent and divalent ions for optimal activity. Optimal KCl concentration is higher than 2.5 M. Phosphatase involved in the non-carboxylating pentose bisphosphate pathway, a nucleoside degradation pathway present in some halophilic archaea. Catalyzes the dephosphorylation of ribulose 1,5-bisphosphate (RuBP) to ribulose 1-phosphate (Ru1P). Shows a strict substrate specificity toward RuBP. The polypeptide is Ribulose-1,5-bisphosphate 5-phosphatase (Halopiger xanaduensis (strain DSM 18323 / JCM 14033 / SH-6)).